The following is a 546-amino-acid chain: Low-affinity methionine permease (546 aa).

Residues 1 to 70 (MEPLLFNSGK…QGRHLGVFST (70 aa)) are Extracellular-facing. A helical transmembrane segment spans residues 71-91 (VVLFVSRIMGSGIFAVPSVIL). Topologically, residues 92–98 (LNTGGNK) are cytoplasmic. The chain crosses the membrane as a helical span at residues 99–119 (LIYFAIWVFSAAIAFAGLYLF). The Extracellular portion of the chain corresponds to 120 to 148 (LEFGSWIPKSGGRKNFLERSFERPRLLIS). The helical transmembrane segment at 149–169 (VVFSCYSVLTGYALTGSIVFG) threads the bilayer. Over 170 to 188 (KYVLSAFGVTDDSWSKYVS) the chain is Cytoplasmic. Residues 189-209 (ISFIIFAVLIHGVSVRHGVFI) traverse the membrane as a helical segment. The Extracellular portion of the chain corresponds to 210–213 (QNAL). Residues 214–234 (GGLKLIMIVLMCFAGLYTLFF) traverse the membrane as a helical segment. Residues 235–254 (YKSTGQVAWDLPVTQVEKDS) lie on the Cytoplasmic side of the membrane. A helical membrane pass occupies residues 255–275 (LLSVSSIATAFISSFFCFSGW). Residues 276-297 (DTVHTVTSEIKNPVKTLKVSGP) lie on the Extracellular side of the membrane. A helical membrane pass occupies residues 298–318 (LSLIICFVCYTMMNVAYLKVL). A topological domain (cytoplasmic) is located at residue Thr-319. A helical membrane pass occupies residues 320 to 340 (YEEIVSAGPLVGSVLFTKLFG). Residues 341-346 (PRVGGK) are Extracellular-facing. Residues 347-367 (FIAFSIAISAASNILVVIYSI) traverse the membrane as a helical segment. Residues 368–393 (SRVNQEIFKEGYLPFSIHMSKNWPFD) are Cytoplasmic-facing. The helical transmembrane segment at 394–414 (APLPSISLCGFITIAWILILP) threads the bilayer. The Extracellular portion of the chain corresponds to 415 to 423 (KEGESFNYL). Residues 424–444 (VSMDGYGNQFFLLLVAIGLFI) traverse the membrane as a helical segment. Residues 445–459 (WRFKHKNEVPEIRAS) lie on the Cytoplasmic side of the membrane. The helical transmembrane segment at 460 to 480 (TFGVLAIITLSLYMLMAPFFA) threads the bilayer. Residues 481–494 (DPSLNRVGFLPPYQ) are Extracellular-facing. The helical transmembrane segment at 495-515 (IMSLLVIVACFFFWLVKFVLL) threads the bilayer. The Cytoplasmic segment spans residues 516–546 (PKFFHYKLLPKITYLHDGLIVTEWVKKPCLC).

To yeast high affinity methionine permease (MUP1).

Its subcellular location is the membrane. Functionally, very low affinity permease for methionine. This Saccharomyces cerevisiae (strain ATCC 204508 / S288c) (Baker's yeast) protein is Low-affinity methionine permease (MUP3).